Consider the following 146-residue polypeptide: Core protein OPG114 (146 aa).

Belongs to the orthopoxvirus OPG114 family. As to quaternary structure, part of a complex composed of the kinase OPG054, OPG092, OPG100, OPG114, OPG115, OPG142 and OPG157.

It is found in the virion. In terms of biological role, late protein which is part of a large complex required for early virion morphogenesis. This complex participates in the formation of virosomes and the incorporation of virosomal contents into nascent immature virions. The sequence is that of Core protein OPG114 (OPG114) from Monkeypox virus.